Reading from the N-terminus, the 569-residue chain is Thiol:disulfide interchange protein DsbD (569 aa).

Residues 1-19 (MAQRILTLILLLCSTSAFA) form the signal peptide. 2 disulfides stabilise this stretch: Cys122–Cys128 and Cys187–Cys309. A run of 7 helical transmembrane segments spans residues 168–188 (LPFS…TPCV), 213–233 (LLTF…GLVV), 248–268 (YVLI…FGLF), 301–321 (IAGL…LLYI), 328–348 (WLGG…LILI), 362–382 (WMEH…VFLL), and 391–411 (GLRL…ITSL). Positions 430 to 569 (LVSVRPLQDW…FSAHLRDRQP (140 aa)) constitute a Thioredoxin domain. Cys484 and Cys487 are disulfide-bonded.

The protein belongs to the thioredoxin family. DsbD subfamily.

It localises to the cell inner membrane. The catalysed reaction is [protein]-dithiol + NAD(+) = [protein]-disulfide + NADH + H(+). It carries out the reaction [protein]-dithiol + NADP(+) = [protein]-disulfide + NADPH + H(+). In terms of biological role, required to facilitate the formation of correct disulfide bonds in some periplasmic proteins and for the assembly of the periplasmic c-type cytochromes. Acts by transferring electrons from cytoplasmic thioredoxin to the periplasm. This transfer involves a cascade of disulfide bond formation and reduction steps. This is Thiol:disulfide interchange protein DsbD from Citrobacter koseri (strain ATCC BAA-895 / CDC 4225-83 / SGSC4696).